We begin with the raw amino-acid sequence, 569 residues long: Urease subunit alpha (569 aa).

The Urease domain maps to 131–569; it reads GGIDAHIHWI…LPLAQRYFLF (439 aa). Ni(2+) is bound by residues His-136, His-138, and Lys-219. Position 219 is an N6-carboxylysine (Lys-219). His-221 contacts substrate. 2 residues coordinate Ni(2+): His-248 and His-274. The Proton donor role is filled by His-322. Asp-362 lines the Ni(2+) pocket.

This sequence belongs to the metallo-dependent hydrolases superfamily. Urease alpha subunit family. Heterotrimer of UreA (gamma), UreB (beta) and UreC (alpha) subunits. Three heterotrimers associate to form the active enzyme. Ni cation serves as cofactor. Carboxylation allows a single lysine to coordinate two nickel ions.

It is found in the cytoplasm. The enzyme catalyses urea + 2 H2O + H(+) = hydrogencarbonate + 2 NH4(+). The protein operates within nitrogen metabolism; urea degradation; CO(2) and NH(3) from urea (urease route): step 1/1. The sequence is that of Urease subunit alpha from Magnetococcus marinus (strain ATCC BAA-1437 / JCM 17883 / MC-1).